Reading from the N-terminus, the 796-residue chain is Merozoite surface protein P92 (796 aa).

The first 26 residues, 1–26 (MFAVNLKICIFLSLVSFLLQCKNTLA), serve as a signal peptide directing secretion. 14 N-linked (GlcNAc...) asparagine glycosylation sites follow: Asn27, Asn37, Asn65, Asn71, Asn168, Asn240, Asn275, Asn359, Asn502, Asn511, Asn607, Asn633, Asn728, and Asn765. The region spanning 571 to 720 (KYEGIDLTDS…NSIKQEINKK (150 aa)) is the 6-Cys domain. Cystine bridges form between Cys614-Cys691 and Cys625-Cys689.

Interacts with host complement factor CFH isoform 1 (via sushi 4-6 domains) and CFH isoform FHL-1 (via sushi 4-6 domains); this interaction recruits CFH onto the merozoite surface preventing complement-mediated cell lysis. The interaction does not affect CFH activity.

The protein localises to the cell surface. Its subcellular location is the cell membrane. Its function is as follows. During the asexual blood stage, recruits host complement factor H CFH to the surface of merozoites resulting in the down-regulation of the host complement alternative pathway and thus, protecting merozoites from complement-mediated lysis. This is Merozoite surface protein P92 from Plasmodium falciparum (isolate 3D7).